A 147-amino-acid polypeptide reads, in one-letter code: 3-dehydroquinate dehydratase (147 aa).

Catalysis depends on Tyr-23, which acts as the Proton acceptor. Substrate is bound by residues Asn-74, His-80, and Asp-87. His-100 acts as the Proton donor in catalysis. Residues 101 to 102 (IS) and Arg-111 each bind substrate.

This sequence belongs to the type-II 3-dehydroquinase family. Homododecamer.

It carries out the reaction 3-dehydroquinate = 3-dehydroshikimate + H2O. Its pathway is metabolic intermediate biosynthesis; chorismate biosynthesis; chorismate from D-erythrose 4-phosphate and phosphoenolpyruvate: step 3/7. Catalyzes a trans-dehydration via an enolate intermediate. The sequence is that of 3-dehydroquinate dehydratase from Bacillus pumilus (strain SAFR-032).